The following is a 100-amino-acid chain: Urease subunit gamma (100 aa).

This sequence belongs to the urease gamma subunit family. As to quaternary structure, heterotrimer of UreA (gamma), UreB (beta) and UreC (alpha) subunits. Three heterotrimers associate to form the active enzyme.

The protein localises to the cytoplasm. It catalyses the reaction urea + 2 H2O + H(+) = hydrogencarbonate + 2 NH4(+). The protein operates within nitrogen metabolism; urea degradation; CO(2) and NH(3) from urea (urease route): step 1/1. The protein is Urease subunit gamma of Sinorhizobium fredii (strain NBRC 101917 / NGR234).